The following is a 518-amino-acid chain: Cytochrome P450 CYP72A219 (518 aa).

A helical membrane pass occupies residues 2-22; that stretch reads ELVLKLISSFCAIVVVILLGW. Cys-465 is a heme binding site.

This sequence belongs to the cytochrome P450 family. Heme is required as a cofactor.

The protein localises to the membrane. Probable heme-thiolate monooxygenase. In Panax ginseng (Korean ginseng), this protein is Cytochrome P450 CYP72A219.